Reading from the N-terminus, the 65-residue chain is MPGVRVKEAEPFELALKKFKKQCEKAGILSEVRKREHYEKPSIKKKKKAIAARKRALKKQRKMID.

It belongs to the bacterial ribosomal protein bS21 family.

The chain is Small ribosomal subunit protein bS21 from Geotalea daltonii (strain DSM 22248 / JCM 15807 / FRC-32) (Geobacter daltonii).